We begin with the raw amino-acid sequence, 184 residues long: Ribosome-recycling factor (184 aa).

The interval 141–161 (KKNDKAISEDDQRKGQDDVQK) is disordered.

Belongs to the RRF family.

It is found in the cytoplasm. In terms of biological role, responsible for the release of ribosomes from messenger RNA at the termination of protein biosynthesis. May increase the efficiency of translation by recycling ribosomes from one round of translation to another. The polypeptide is Ribosome-recycling factor (Solidesulfovibrio magneticus (strain ATCC 700980 / DSM 13731 / RS-1) (Desulfovibrio magneticus)).